We begin with the raw amino-acid sequence, 202 residues long: Small ribosomal subunit protein uS5 (202 aa).

The span at 1 to 13 (MPGQQRRGGGSGG) shows a compositional bias: gly residues. Residues 1–31 (MPGQQRRGGGSGGSDRRERRDRSGGGPAQEK) form a disordered region. The segment covering 14 to 23 (SDRRERRDRS) has biased composition (basic and acidic residues). The S5 DRBM domain maps to 34–97 (YVERVVAINR…EEAKKHFFKV (64 aa)).

Belongs to the universal ribosomal protein uS5 family. As to quaternary structure, part of the 30S ribosomal subunit. Contacts proteins S4 and S8.

In terms of biological role, with S4 and S12 plays an important role in translational accuracy. Located at the back of the 30S subunit body where it stabilizes the conformation of the head with respect to the body. This Frankia alni (strain DSM 45986 / CECT 9034 / ACN14a) protein is Small ribosomal subunit protein uS5.